The sequence spans 103 residues: Large ribosomal subunit protein bL21 (103 aa).

The protein belongs to the bacterial ribosomal protein bL21 family. As to quaternary structure, part of the 50S ribosomal subunit. Contacts protein L20.

Its function is as follows. This protein binds to 23S rRNA in the presence of protein L20. The polypeptide is Large ribosomal subunit protein bL21 (Escherichia coli O127:H6 (strain E2348/69 / EPEC)).